The following is a 428-amino-acid chain: MSAIVDVIAREIIDSRGNPTIEADVLLESGVLGRASVPSGASVGTREAVELRDGDAQRYYGKGVLKAVESVNGEISETIMGLDAMEQCFIDKTLIELDGSENKSRLGANAILAVSLAVAKAAAEESGLPLYRYLGGINAKWLPVPMMNLVNGGVHANNRLDMQEFMIIPLGLPNLREAVRCGAEVFSTLRTLLNKRNLPTTVGDEGGFAPSFARNEEALALIVQAIDEAGYQPGSEVAIGVDCASSEFFREGKYHLDVDGLGLTSAQFVDYLATWVEKYPIISIEDGMSEQDWEGWGLLTERLGKTVQLVGDDVFVTNTRILKEGISRNIANSILIKINQIGTLTETLNAIEMAKCAGYTAIVSHRSGETEDTTIADIAVATNALQIKTGSLSRSDRLAKYNQLLRIEEDLGEMAQYAGRSAFYQLKP.

Residue Gln-163 participates in (2R)-2-phosphoglycerate binding. Catalysis depends on Glu-205, which acts as the Proton donor. Residues Asp-242, Glu-285, and Asp-312 each contribute to the Mg(2+) site. (2R)-2-phosphoglycerate contacts are provided by Lys-337, Arg-366, Ser-367, and Lys-388. Lys-337 functions as the Proton acceptor in the catalytic mechanism.

Belongs to the enolase family. Mg(2+) serves as cofactor.

Its subcellular location is the cytoplasm. It is found in the secreted. It localises to the cell surface. It catalyses the reaction (2R)-2-phosphoglycerate = phosphoenolpyruvate + H2O. It participates in carbohydrate degradation; glycolysis; pyruvate from D-glyceraldehyde 3-phosphate: step 4/5. Functionally, catalyzes the reversible conversion of 2-phosphoglycerate (2-PG) into phosphoenolpyruvate (PEP). It is essential for the degradation of carbohydrates via glycolysis. The protein is Enolase of Nitrosomonas europaea (strain ATCC 19718 / CIP 103999 / KCTC 2705 / NBRC 14298).